The primary structure comprises 62 residues: Amolopin-P2 (62 aa).

Residues 1–22 (MFTLKKSLLLLFFLGTISLSLC) form the signal peptide. Positions 23–44 (EQERGADEEENGGEVTEQEVKR) are excised as a propeptide.

This sequence belongs to the frog skin active peptide (FSAP) family. Amolopin subfamily. In terms of tissue distribution, expressed by the skin glands.

Its subcellular location is the secreted. Antimicrobial peptide with activity against Gram-positive bacteria. Has been tested against S.aureus (MIC=37.5 ug/mL), against B.pumilus (MIC=75.0 ug/mL), B.cereus (no activity detected). Does not show activity against Gram-negative bacteria (E.coli, B.dysenteriae, A.calcoaceticus, P.aeruginosa) and fungi (C.albicans). Does not show hemolytic activity against rabbit erythrocytes. This is Amolopin-P2 from Amolops loloensis (Lolokou Sucker Frog).